Reading from the N-terminus, the 103-residue chain is Thioredoxin-1 (103 aa).

The Thioredoxin domain maps to 2-103 (VKQVSDSSEF…KLEASIKANL (102 aa)). Active-site nucleophile residues include C30 and C33. A disulfide bridge links C30 with C33.

This sequence belongs to the thioredoxin family.

In terms of biological role, participates in various redox reactions through the reversible oxidation of its active center dithiol to a disulfide and catalyzes dithiol-disulfide exchange reactions. This Schizosaccharomyces pombe (strain 972 / ATCC 24843) (Fission yeast) protein is Thioredoxin-1 (trx1).